The following is a 315-amino-acid chain: DNA-directed RNA polymerase subunit alpha (315 aa).

An alpha N-terminal domain (alpha-NTD) region spans residues 1–228 (MLEIEKPKIE…EHFKLFMTLT (228 aa)). Residues 245–315 (KEKVLEMTIE…LGLSLKLNDE (71 aa)) are alpha C-terminal domain (alpha-CTD).

Belongs to the RNA polymerase alpha chain family. In terms of assembly, homodimer. The RNAP catalytic core consists of 2 alpha, 1 beta, 1 beta' and 1 omega subunit. When a sigma factor is associated with the core the holoenzyme is formed, which can initiate transcription.

The enzyme catalyses RNA(n) + a ribonucleoside 5'-triphosphate = RNA(n+1) + diphosphate. Functionally, DNA-dependent RNA polymerase catalyzes the transcription of DNA into RNA using the four ribonucleoside triphosphates as substrates. In Clostridium acetobutylicum (strain ATCC 824 / DSM 792 / JCM 1419 / IAM 19013 / LMG 5710 / NBRC 13948 / NRRL B-527 / VKM B-1787 / 2291 / W), this protein is DNA-directed RNA polymerase subunit alpha.